The chain runs to 674 residues: Probable nucleolar GTP-binding protein 1 (674 aa).

The OBG-type G domain maps to 169-346; sequence RTLLLTGYPN…VKDTACSILF (178 aa). GTP contacts are provided by residues 175 to 182, 221 to 225, and 289 to 292; these read GYPNVGKS, DTPGI, and NKID. Basic and acidic residues predominate over residues 518-527; sequence RINHQIKDSS. 2 disordered regions span residues 518 to 538 and 564 to 674; these read RINH…RRGI and VRDH…NDFR. Residues 570–580 are compositionally biased toward basic residues; the sequence is SRISGKKRSRS. Basic and acidic residues-rich tracts occupy residues 619-633 and 641-653; these read GFHD…DKLD and NQDG…DRHV.

The protein belongs to the TRAFAC class OBG-HflX-like GTPase superfamily. OBG GTPase family. NOG subfamily.

Its subcellular location is the nucleus. It is found in the nucleolus. Functionally, involved in the biogenesis of the 60S ribosomal subunit. In Dictyostelium discoideum (Social amoeba), this protein is Probable nucleolar GTP-binding protein 1 (nog1).